Consider the following 348-residue polypeptide: DNA ligase C1 (348 aa).

K32 acts as the N6-AMP-lysine intermediate in catalysis.

It belongs to the ATP-dependent DNA ligase family. A divalent metal cation serves as cofactor.

The catalysed reaction is ATP + (deoxyribonucleotide)n-3'-hydroxyl + 5'-phospho-(deoxyribonucleotide)m = (deoxyribonucleotide)n+m + AMP + diphosphate.. DNA ligase that seals nicks in double-stranded DNA during DNA replication, DNA recombination and DNA repair. Has weak intrinsic nick joining activities and accumulates DNA-adenylate. Acts as a backup for LigD in the Ku-LigD-dependent NHEJ pathway. This Mycolicibacterium smegmatis (strain ATCC 700084 / mc(2)155) (Mycobacterium smegmatis) protein is DNA ligase C1 (ligC).